The following is a 134-amino-acid chain: Small ribosomal subunit protein bS6 (134 aa).

A compositionally biased stretch (basic and acidic residues) spans asparagine 113–proline 122. Positions asparagine 113–asparagine 134 are disordered.

Belongs to the bacterial ribosomal protein bS6 family.

In terms of biological role, binds together with bS18 to 16S ribosomal RNA. The polypeptide is Small ribosomal subunit protein bS6 (Borrelia duttonii (strain Ly)).